Reading from the N-terminus, the 118-residue chain is Small ribosomal subunit protein uS13 (118 aa).

Positions 94 to 118 (GLPVRGQRTKTNARTRKGPRKPIKK) are disordered.

The protein belongs to the universal ribosomal protein uS13 family. In terms of assembly, part of the 30S ribosomal subunit. Forms a loose heterodimer with protein S19. Forms two bridges to the 50S subunit in the 70S ribosome.

Functionally, located at the top of the head of the 30S subunit, it contacts several helices of the 16S rRNA. In the 70S ribosome it contacts the 23S rRNA (bridge B1a) and protein L5 of the 50S subunit (bridge B1b), connecting the 2 subunits; these bridges are implicated in subunit movement. Contacts the tRNAs in the A and P-sites. The chain is Small ribosomal subunit protein uS13 from Salmonella paratyphi A (strain ATCC 9150 / SARB42).